The sequence spans 89 residues: Cell division topological specificity factor (89 aa).

Belongs to the MinE family.

Prevents the cell division inhibition by proteins MinC and MinD at internal division sites while permitting inhibition at polar sites. This ensures cell division at the proper site by restricting the formation of a division septum at the midpoint of the long axis of the cell. This chain is Cell division topological specificity factor, found in Legionella pneumophila (strain Paris).